Consider the following 348-residue polypeptide: Mannonate dehydratase (348 aa).

The protein belongs to the mannonate dehydratase family. Fe(2+) serves as cofactor. It depends on Mn(2+) as a cofactor.

It carries out the reaction D-mannonate = 2-dehydro-3-deoxy-D-gluconate + H2O. It functions in the pathway carbohydrate metabolism; pentose and glucuronate interconversion. Functionally, catalyzes the dehydration of D-mannonate. The chain is Mannonate dehydratase from Streptococcus agalactiae serotype Ia (strain ATCC 27591 / A909 / CDC SS700).